A 38-amino-acid polypeptide reads, in one-letter code: Potassium channel toxin alpha-KTx 3.2 (38 aa).

Disulfide bonds link Cys-8–Cys-28, Cys-14–Cys-33, and Cys-18–Cys-35.

It belongs to the short scorpion toxin superfamily. Potassium channel inhibitor family. Alpha-KTx 03 subfamily. In terms of tissue distribution, expressed by the venom gland.

The protein localises to the secreted. Its function is as follows. Potent inhibitor of the Shaker potassium channels and its mammalian homologs (Kv1.1/KCNA1, Kv1.3/KCNA3, Kv1.6/KCNA6) (Ki&lt;1 nM for all channels). Also blocks Kv1.2/KCNA2 (IC(50)=26.8 nM). It also shows a weak interaction with nicotinic acetylcholine receptors (nAChR), suggesting it may weakly inhibit it. The sequence is that of Potassium channel toxin alpha-KTx 3.2 from Leiurus hebraeus (Hebrew deathstalker scorpion).